Here is a 520-residue protein sequence, read N- to C-terminus: Peptide chain release factor 3 (520 aa).

The tr-type G domain occupies 8–277; that stretch reads ESRKTFAIIS…HAPMPNARQT (270 aa). Residues 17–24, 85–89, and 139–142 each bind GTP; these read SHPDAGKT, DTPGH, and NKLD.

The protein belongs to the TRAFAC class translation factor GTPase superfamily. Classic translation factor GTPase family. PrfC subfamily.

The protein resides in the cytoplasm. Its function is as follows. Increases the formation of ribosomal termination complexes and stimulates activities of RF-1 and RF-2. It binds guanine nucleotides and has strong preference for UGA stop codons. It may interact directly with the ribosome. The stimulation of RF-1 and RF-2 is significantly reduced by GTP and GDP, but not by GMP. This is Peptide chain release factor 3 from Staphylococcus saprophyticus subsp. saprophyticus (strain ATCC 15305 / DSM 20229 / NCIMB 8711 / NCTC 7292 / S-41).